A 535-amino-acid polypeptide reads, in one-letter code: Succinate-semialdehyde dehydrogenase, mitochondrial (535 aa).

The transit peptide at 1–47 (MATCFWLRSCGARRLGSTFPGCRLRPRAGGLVPASGPAPGPAQLRCY) directs the protein to the mitochondrion. K126 carries the N6-acetyllysine; alternate modification. K126 is modified (N6-succinyllysine; alternate). K135 and K184 each carry N6-succinyllysine. NAD(+)-binding positions include R213 and 228–231 (KPAE). A substrate-binding site is contributed by R213. K265 is subject to N6-acetyllysine; alternate. K265 bears the N6-succinyllysine; alternate mark. 284–289 (GSTTTG) is an NAD(+) binding site. E306 serves as the catalytic Proton acceptor. R334 contributes to the substrate binding site. C340 functions as the Nucleophile in the catalytic mechanism. Cysteines 340 and 342 form a disulfide. Residue K365 is modified to N6-acetyllysine. At K402 the chain carries N6-succinyllysine. K411 is modified (N6-acetyllysine). S498 lines the substrate pocket. The residue at position 499 (S499) is a Phosphoserine.

The protein belongs to the aldehyde dehydrogenase family. Homotetramer.

It localises to the mitochondrion. The enzyme catalyses succinate semialdehyde + NAD(+) + H2O = succinate + NADH + 2 H(+). It functions in the pathway amino-acid degradation; 4-aminobutanoate degradation. Redox-regulated. Inhibited under oxydizing conditions. Catalyzes one step in the degradation of the inhibitory neurotransmitter gamma-aminobutyric acid (GABA). The sequence is that of Succinate-semialdehyde dehydrogenase, mitochondrial (ALDH5A1) from Hylobates lar (Lar gibbon).